Reading from the N-terminus, the 117-residue chain is Pancreatic progenitor cell differentiation and proliferation factor A (117 aa).

The tract at residues 22–46 (GSTSSNSSCSSSEYTGEVIPHPPGL) is disordered. A compositionally biased stretch (low complexity) spans 23–33 (STSSNSSCSSS).

This sequence belongs to the PPDPF family. Expressed exclusively in the exocrine cells during pancreas development.

In terms of biological role, probable regulator of exocrine pancreas development. This Danio rerio (Zebrafish) protein is Pancreatic progenitor cell differentiation and proliferation factor A (ppdpfa).